We begin with the raw amino-acid sequence, 813 residues long: Homeobox-leucine zipper protein ROC4 (813 aa).

Positions 62-112 (EVENEMSRSGSDHLDVVSCGDAGGGGGDDDDDEDAEHGNPPKRKKRYHRHT) are disordered. Over residues 101-112 (PPKRKKRYHRHT) the composition is skewed to basic residues. Positions 104–163 (RKKRYHRHTPQQIQELEAMFKECPHPDEKQRAELSKRLGLEPRQVKFWFQNRRTQMKMQL) form a DNA-binding region, homeobox. The stretch at 152 to 191 (FQNRRTQMKMQLERHENSLLKQENDKLRSENLSIREATSN) forms a coiled coil. Residues 306–559 (AGIDKSLFLE…LQRQCECLAL (254 aa)) enclose the START domain.

The protein belongs to the HD-ZIP homeobox family. Class IV subfamily.

The protein localises to the nucleus. Its function is as follows. Probable transcription factor. The polypeptide is Homeobox-leucine zipper protein ROC4 (ROC4) (Oryza sativa subsp. japonica (Rice)).